Here is a 695-residue protein sequence, read N- to C-terminus: Elongation factor G (695 aa).

Residues 8–282 (KDTRNIGIMA…AIVDYMPAPI (275 aa)) enclose the tr-type G domain. GTP is bound by residues 17–24 (AHIDAGKT), 81–85 (DTPGH), and 135–138 (NKMD). Residues 285–304 (PDIKGVDPQTDEPTTRKSSD) are disordered.

This sequence belongs to the TRAFAC class translation factor GTPase superfamily. Classic translation factor GTPase family. EF-G/EF-2 subfamily.

It localises to the cytoplasm. Catalyzes the GTP-dependent ribosomal translocation step during translation elongation. During this step, the ribosome changes from the pre-translocational (PRE) to the post-translocational (POST) state as the newly formed A-site-bound peptidyl-tRNA and P-site-bound deacylated tRNA move to the P and E sites, respectively. Catalyzes the coordinated movement of the two tRNA molecules, the mRNA and conformational changes in the ribosome. This chain is Elongation factor G, found in Finegoldia magna (strain ATCC 29328 / DSM 20472 / WAL 2508) (Peptostreptococcus magnus).